A 97-amino-acid chain; its full sequence is Nucleoid-associated protein HPP12_0031 (97 aa).

Belongs to the YbaB/EbfC family. In terms of assembly, homodimer.

Its subcellular location is the cytoplasm. The protein resides in the nucleoid. In terms of biological role, binds to DNA and alters its conformation. May be involved in regulation of gene expression, nucleoid organization and DNA protection. The sequence is that of Nucleoid-associated protein HPP12_0031 from Helicobacter pylori (strain P12).